The following is a 1044-amino-acid chain: GRB10-interacting GYF protein 1 (1044 aa).

4 positions are modified to phosphoserine: Ser-24, Ser-28, Ser-137, and Ser-157. Disordered regions lie at residues 104 to 290 and 306 to 424; these read GKGA…DGLP and ASGA…LEDE. 2 stretches are compositionally biased toward basic and acidic residues: residues 148–179 and 186–203; these read NPRE…RSGF and PRKE…SLRE. Ser-228 carries the post-translational modification Phosphoserine. Composition is skewed to basic and acidic residues over residues 237–265 and 316–332; these read GWRE…EDGR and GPKE…FRGL. Residues 333-350 show a composition bias toward acidic residues; it reads EEEEEEEEEPSEGVDEER. At Ser-343 the chain carries Phosphoserine. The segment covering 366 to 379 has biased composition (low complexity); that stretch reads NSSSPSSLPALGPL. The span at 389-403 shows a compositional bias: basic and acidic residues; sequence AVEKELPPAEGDELR. The residue at position 408 (Ser-408) is a Phosphoserine. One can recognise a GYF domain in the interval 476–524; it reads ARKWFYKDPQGEIQGPFTTQEMAEWFQAGYFSMSLLVKRGCDEGFQPLG. Residues Ser-540 and Ser-634 each carry the phosphoserine modification. Residues 692–706 show a composition bias toward basic and acidic residues; that stretch reads KREEEERKRREEKRR. 6 disordered regions span residues 692-721, 820-842, 855-883, 966-987, 1000-1019, and 1024-1044; these read KREE…RQEE, EAGP…LGLW, SLGL…RKKT, QKAS…QEAW, NHST…RALM, and PSIL…VDDY. The span at 829–839 shows a compositional bias: gly residues; sequence DKSGGSSGGNL. 2 stretches are compositionally biased toward low complexity: residues 855–877 and 970–984; these read SLGL…LSGR and QQRQ…QQQQ. Ser-863 carries the phosphoserine modification.

Belongs to the GIGYF family. Interacts with GRB10. This transient binding is increased under IGF1 stimulation and leads to recruitment of GIGYF1/GRB10 complex to IGF1 receptor. Interacts with DDX6. As to expression, ubiquitous. Lower expression in skeletal muscle, liver and testis.

In terms of biological role, may act cooperatively with GRB10 to regulate tyrosine kinase receptor signaling. May increase IGF1 receptor phosphorylation under IGF1 stimulation as well as phosphorylation of IRS1 and SHC1. This chain is GRB10-interacting GYF protein 1 (Gigyf1), found in Mus musculus (Mouse).